The chain runs to 6548 residues: Epiplakin (6548 aa).

Threonine 33 is modified (phosphothreonine). Plectin repeat units lie at residues 41-78, 79-116, 117-154, 155-192, 285-322, 323-360, 362-398, 399-436, and 437-470; these read AALPTTARSIAGVYVEASGQTQSIYAAIKQGLLPTGLG, LTLLEAQAATGGLVDLAQGQLLPVSEALRRGLVGLELK, EKLLAAERAVTGYPDPYGGEKLSLFQAIKKEVVDRTLG, WRLLEAQLATGGLVDPTQGVQVAPELACQQGLLDKETW, RRYLEGTGGLAGVVLLPGGHKKSFFQATVEHLVSKGIA, LQLLEAQAATRTLVHPTTGQRLWVEEAVKAGLVGPELH, QLLVAEQAVTGYYDPFSSSRIPVFQAMKKGLVDQPLA, LRLLDAQLATGGLICPARRFRLPLEAALRFGCLDEETR, and QRLSQAMGFSDPTTHDRLGYEQLLALSVTDPETG. The interaction with KRT5 stretch occupies residues 49-1123; the sequence is SIAGVYVEAS…KASGLHLLPL (1075 aa). The stretch at 545 to 565 forms a coiled coil; the sequence is SVEELAAELKNIVEQAAATAK. Plectin repeat units follow at residues 611 to 648, 649 to 686, 687 to 724, 725 to 762, and 766 to 800; these read QRYLQGTGSIAGLLLPDSQERLSIYEARSKGLLRPGTA, LILLEAQAATGFIIDPKENKRYSVEEALRAGVIGPDVY, AKLLSAEHAVTGYTDPYSGEQISLFQAMQRDLIVRDHG, IRLLEAQIATGGVIDPVHSHRVPVDVAYQRGYFDQILN, and LDPSDDTKGFFDPNTHENLTYLQLLERCVHDSETG. Residues 851-886 adopt a coiled-coil conformation; the sequence is TEDRRRQLLQRYRQRKITLEQVTQLLEKEMRRWTDI. Plectin repeat units follow at residues 931 to 968, 969 to 1006, 1007 to 1044, 1224 to 1284, 1285 to 1322, 1323 to 1360, 1361 to 1398, and 1402 to 1436; these read HRYLRGSGTVGGVLLKPSNQRISLYQAMKQKLLPPSTA, LALLEAQAATGTITDPCSMETLSVDEAVCRGVVGAEVY, GKLKRAEHSITGYRDPFSGKKVSLFRAMKKGLVPVEQA, QETL…TGLG, QQLLEAQVASGFLVNPLTNQRLSVEGAVKAGLVGMEQS, EHLRQVEKAVTGYSDPFSGGSLSLWQAMEKGLVTQSEA, FPLLQVQLATGGVVDPVHGVHLPQEVAYKLGLLDEQTS, and TATGKENKLFFDPNSREKVTYQQLRELCVLDADTG. Threonine 1551 bears the Phosphothreonine mark. Plectin repeat units lie at residues 1572–1609, 1610–1647, 1648–1685, 1686–1723, and 1727–1761; these read RRSLEGGNFIAGVLIQDTKEKMSIPEALRRHILRPGTA, LVLLEAQAATGFIIDPVENRKLTVEQAFQAGMFGKETY, MKLLSAERAVTGYTDPYTGEQISLFQAMQRDLIVRDHG, IRLLEAQIATGGIIDPVHSHRVPVDVAYQRGYFNEEMN, and SDPSDDTKGFFDPNTHENLTYLQLLERCVEDPETG. The tract at residues 1580–6545 is interaction with KRT5; that stretch reads FIAGVLIQDT…PETGLLFLSL (4966 aa). The stretch at 1819-1851 forms a coiled coil; that stretch reads RKLLREYRAQNIGLENLLEVITSTVEETEKQSQ. 9 Plectin repeats span residues 1898-1935, 1936-1973, 1974-2011, 2012-2049, 2225-2267, 2268-2305, 2306-2343, 2344-2381, and 2385-2419; these read RVYLEGSNYIAGVIAPLTQKVMSFYEASREELIPAGFA, AQMLEAQAATGYLMDPCTNQRLCVDEAIAAGLVGEDLR, ERLVNAEMAAKGYKDPATGETIPLYQAMERKLVGREEA, LRLLEVQVATGGVIDPRHHHRVPLDTACQRGCMCDDSL, KRYL…PGTA, LVLLEAQAATGFIIDPVNNRRLSVEEAVAAGVVGGEIQ, EKLLSAERAVTGYTDPYTGDQISLFQAMQRDLIVRDHG, IRLLEAQIATGGVIDPVHSHRVPVDVAYQRGYFDEDMN, and ADPGDDTKGFFDPNTHENLTYLQLLRRCVRDPETG. Serine 2430 and serine 2508 each carry phosphoserine. A disordered region spans residues 2578-2626; that stretch reads AEETQESKPKPRDASLKQQDTGARGSGTSPDEGDAQDSSESARQQQEQT. The span at 2582–2592 shows a compositional bias: basic and acidic residues; the sequence is QESKPKPRDAS. Polar residues-rich tracts occupy residues 2593-2606 and 2615-2626; these read LKQQDTGARGSGTS and SSESARQQQEQT. 5 Plectin repeats span residues 2740–2782, 2783–2820, 2821–2858, 2859–2896, and 2900–2934; these read KRYL…PGTA, LVLLEAQAATGFIIDPVNNRRLSVEEAVAAGVVGGEIQ, EKLLSAERAVTGYTDPYTGDQISLFQAMQRDLIVRDHG, IRLLEAQIATGGVIDPVHSHRVPVDVAYQRGYFDEDMN, and ADPGDDTKGFFDPNTHENLTYLQLLRRCVRDPETG. The interaction with KRT14 stretch occupies residues 2748 to 2940; it reads CIAGVLVPVQ…PETGFYMLQL (193 aa). The disordered stretch occupies residues 3093–3144; the sequence is AEETQESKPKPRDASLKQQDTGARGSGTSPDEGDAQDSSESARQQQEQTLRA. Over residues 3097–3107 the composition is skewed to basic and acidic residues; the sequence is QESKPKPRDAS. Polar residues-rich tracts occupy residues 3108–3121 and 3130–3144; these read LKQQDTGARGSGTS and SSESARQQQEQTLRA. A Phosphoserine modification is found at serine 3220. Plectin repeat units lie at residues 3255–3297, 3298–3335, 3336–3373, 3374–3411, and 3415–3449; these read KRYL…PGTA, LVLLEAQAATGFIIDPVNNRRLSVEEAVAAGVVGGEIQ, EKLLSAERAVTGYTDPYTGDQISLFQAMQRDLIVRDHG, IRLLEAQIATGGVIDPVHSHRVPVDVAYQRGYFDEDMN, and ADPGDDTKGFFDPNTHENLTYLQLLRRCVRDPETG. Serine 3460 and serine 3538 each carry phosphoserine. Residues 3608-3659 are disordered; the sequence is AEETQESKPKPRDASLKQQDTGARGSGTSPDEGDAQDSSESARQQQEQTLRA. The segment covering 3612 to 3622 has biased composition (basic and acidic residues); sequence QESKPKPRDAS. Polar residues-rich tracts occupy residues 3623–3636 and 3645–3659; these read LKQQDTGARGSGTS and SSESARQQQEQTLRA. Position 3735 is a phosphoserine (serine 3735). Plectin repeat units lie at residues 3770–3812, 3813–3850, 3851–3888, 3889–3926, and 3930–3964; these read KRYL…PGTA, LVLLEAQAATGFIIDPVNNRRLSVEEAVAAGVVGGEIQ, EKLLSAERAVTGYTDPYTGDQISLFQAMQRDLIVRDHG, IRLLEAQIATGGVIDPVHSHRVPVDVAYQRGYFDEDMN, and ADPGDDTKGFFDPNTHENLTYLQLLRRCVRDPETG. A phosphoserine mark is found at serine 3975 and serine 4053. A disordered region spans residues 4123–4174; it reads AEETQESKPKPRDASLKQQDTGARGSGTSPDEGDAQDSSESARQQQEQTLRA. Basic and acidic residues predominate over residues 4127 to 4137; sequence QESKPKPRDAS. 2 stretches are compositionally biased toward polar residues: residues 4138–4151 and 4160–4174; these read LKQQDTGARGSGTS and SSESARQQQEQTLRA. Plectin repeat units lie at residues 4285–4327, 4328–4365, 4366–4403, 4404–4441, and 4445–4479; these read KRYL…PGTA, LVLLEAQAATGFIIDPVNNRRLSVEEAVAAGVVGGEIQ, EKLLSAERAVTGYTDPYTGDQISLFQAMQRDLIVRDHG, IRLLEAQIATGGVIDPVHSHRVPVDVAYQRGYFDEDMN, and ADPGDDTKGFFDPNTHENLTYLQLLRRCVRDPETG. Residues 4638-4689 form a disordered region; the sequence is AEETQESKPKPRDASLKQQDTGARGSGTSPDEGDAQDSSESARQQQEQTLRA. The segment covering 4642–4652 has biased composition (basic and acidic residues); the sequence is QESKPKPRDAS. 2 stretches are compositionally biased toward polar residues: residues 4653–4666 and 4675–4689; these read LKQQDTGARGSGTS and SSESARQQQEQTLRA. A Phosphoserine modification is found at serine 4765. 5 Plectin repeats span residues 4800–4842, 4843–4880, 4881–4918, 4919–4956, and 4960–4994; these read KRYL…PGTA, LVLLEAQAATGFIIDPVNNRRLSVEEAVAAGVVGGEIQ, EKLLSAERAVTGYTDPYTGDQISLFQAMQRDLIVRDHG, IRLLEAQIATGGVIDPVHSHRVPVDVAYQRGYFDEDMN, and ADPGDDTKGFFDPNTHENLTYLQLLRRCVRDPETG. Residues serine 5005 and serine 5083 each carry the phosphoserine modification. The interval 5153-5204 is disordered; sequence AEETQESKPKPRDASLKQQDTGARGSGTSPDEGDAQDSSESARQQQEQTLRA. Residues 5157–5167 are compositionally biased toward basic and acidic residues; it reads QESKPKPRDAS. Polar residues-rich tracts occupy residues 5168-5181 and 5190-5204; these read LKQQDTGARGSGTS and SSESARQQQEQTLRA. Plectin repeat units follow at residues 5315–5357, 5358–5395, 5396–5433, 5434–5471, and 5475–5509; these read KRYL…PGTA, LVLLEAQAATGFIIDPVNNRRLSVEEAVAAGVVGGEIQ, EKLLSAERAVTGYTDPYTGDQISLFQAMQRDLIVRDHG, IRLLEAQIATGGVIDPVHSHRVPVDVAYQRGYFDEDMN, and ADPGDDTKGFFDPNTHENLTYLQLLRRCVRDPETG. A disordered region spans residues 5668-5719; that stretch reads AEETQESKPKPRDASLKQQDTGARGSGTSPDEGDAQDSSESARQQQEQTLRA. Residues 5672 to 5682 show a composition bias toward basic and acidic residues; the sequence is QESKPKPRDAS. 2 stretches are compositionally biased toward polar residues: residues 5683–5696 and 5705–5719; these read LKQQDTGARGSGTS and SSESARQQQEQTLRA. Serine 5795 is modified (phosphoserine). 5 Plectin repeats span residues 5830–5872, 5873–5910, 5911–5948, 5949–5986, and 5990–6024; these read KRYL…PGTA, LVLLEAQAATGFIIDPVNNRRLSVEEAVAAGVVGGEIQ, EKLLSAERAVTGYTDPYTGDQISLFQAMQRDLIVRDHG, IRLLEAQIATGGVIDPVHSHRVPVDVAYQRGYFDEDMN, and ADPGDDTKGFFDPNTHENLTYLQLLRRCVRDPETG. Phosphoserine is present on residues serine 6035 and serine 6113. The disordered stretch occupies residues 6183–6234; that stretch reads AEETQESKPKPRDASLKQQDTGARGSGTSPDEGDAQDSSESARQQQEQTLRA. Residues 6187 to 6197 are compositionally biased toward basic and acidic residues; sequence QESKPKPRDAS. Polar residues-rich tracts occupy residues 6198–6211 and 6220–6234; these read LKQQDTGARGSGTS and SSESARQQQEQTLRA. Residue serine 6310 is modified to Phosphoserine. Plectin repeat units lie at residues 6345–6387, 6388–6425, 6426–6463, 6464–6501, and 6505–6539; these read KRYL…PGTA, LVLLEAQAATGFIIDPVNNRRLSVEEAVAAGVVGGEIQ, EKLLSAERAVTGYTDPYTGDQISLFQAMQRDLIVKNHG, IRLLEAQIATGGVIDPVHSHRVPVDVAYQRGYFDQEMN, and ADPGDDTKGFFDPNTHENLTYLQLLQRATIDPETG.

This sequence belongs to the plakin or cytolinker family. Interacts with KRT5, KRT14 and KRT5/KRT14 heterotetramer; interacts preferentially with assembled filaments rather than keratin monomers. Interacts with KRT8 and KRT18 and KRT8/KRT18 heterotetramer; interacts preferentially with assembled filaments rather than keratin monomers. Interacts with KRT1, VIM and DES; interaction is stronger with KRT1 than with VIM or DES; interaction is dependent of higher-order structure of intermediate filament. In terms of tissue distribution, high levels in skin, small intestine and salivary gland. Lower levels in lung, uterus and liver. Not detected in brain, kidney, muscle, heart or spleen. In skin, expressed in all epidermal layers but not in the dermis. In intestine, expressed exclusively in the epithelial cell layer of the villi. In liver, expressed at hepatocyte margins. Around the region of the wound, expressed in the upper half of the epidermis. Weakly expressed on the basilar side of the suprabasal layer of the epidermis at the wound's edge. Expressed strongly in the upper layer of the epidermis, especially in larger keratinocytes. Expressed in undifferentiated primary keratinocytes. Strongly expressed in ductal cells, and also expressed in acinar cells. Expressed in hepatocytes and cholangiocytes.

It localises to the cytoplasm. The protein resides in the cytoskeleton. The protein localises to the apicolateral cell membrane. Its subcellular location is the basolateral cell membrane. It is found in the cell junction. It localises to the hemidesmosome. The protein resides in the tight junction. The protein localises to the cell projection. Its function is as follows. Cytoskeletal linker protein that connects to intermediate filaments and controls their reorganization in response to stress. In response to mechanical stress like wound healing, is associated with the machinery for cellular motility by slowing down keratinocyte migration and proliferation and accelerating keratin bundling in proliferating keratinocytes thus contributing to tissue architecture. However in wound healing in corneal epithelium also positively regulates cell differentiation and proliferation and negatively regulates migration thereby controlling corneal epithelium morphogenesis and integrity. In response to cellular stress, plays a role in keratin filament reorganization, probably by protecting keratin filaments against disruption. During liver and pancreas injuries, plays a protective role by chaperoning disease-induced intermediate filament reorganization. This is Epiplakin from Mus musculus (Mouse).